A 439-amino-acid polypeptide reads, in one-letter code: 5-methylthioadenosine/S-adenosylhomocysteine deaminase (439 aa).

Zn(2+) contacts are provided by H70 and H72. E99 and H192 together coordinate substrate. H219 is a binding site for Zn(2+). E222 and D307 together coordinate substrate. Residue D307 coordinates Zn(2+).

This sequence belongs to the metallo-dependent hydrolases superfamily. MTA/SAH deaminase family. Requires Zn(2+) as cofactor.

It catalyses the reaction S-adenosyl-L-homocysteine + H2O + H(+) = S-inosyl-L-homocysteine + NH4(+). It carries out the reaction S-methyl-5'-thioadenosine + H2O + H(+) = S-methyl-5'-thioinosine + NH4(+). Its function is as follows. Catalyzes the deamination of 5-methylthioadenosine and S-adenosyl-L-homocysteine into 5-methylthioinosine and S-inosyl-L-homocysteine, respectively. Is also able to deaminate adenosine. The chain is 5-methylthioadenosine/S-adenosylhomocysteine deaminase from Thermodesulfovibrio yellowstonii (strain ATCC 51303 / DSM 11347 / YP87).